The chain runs to 566 residues: Mucolipin-2 (566 aa).

Topologically, residues 1 to 65 (MPGDEETLDL…YRARRQIPWK (65 aa)) are cytoplasmic. A helical transmembrane segment spans residues 66–86 (LGLQILKIVMVTTQLVRFGLS). The Extracellular portion of the chain corresponds to 87–288 (NQLVVAFKED…ISGSTQRSTH (202 aa)). The interval 107–123 (KGFSGVDEDDYSCSIYT) is extracellular/lumenal pore loop. Intrachain disulfides connect cysteine 164–cysteine 190 and cysteine 243–cysteine 274. The chain crosses the membrane as a helical span at residues 289–309 (YLLVFDVFVIMICLASLILCT). The Cytoplasmic portion of the chain corresponds to 310–346 (RSIVLALRLRKRFLNFFLEKYKQRVCGADQWEFVNGW). A helical transmembrane segment spans residues 347–367 (YVLVTISDLMTIIGSILKMEI). Residues 368–376 (KAKKLTNYD) are Extracellular-facing. A helical transmembrane segment spans residues 377–397 (VCSILLGTSTLFVWVGVIRYL). At 398–419 (GYFQTYNVLILTMQASLPKVLR) the chain is on the cytoplasmic side. Residues 420–440 (FCACAGMIYLGYTFCGWIVLG) traverse the membrane as a helical segment. At 441–448 (PYHEKFEN) the chain is on the extracellular side. An intramembrane region (pore-forming) is located at residues 449–469 (LNIVAECLFSLVNGDDMFATF). The short motif at 461-464 (NGDD) is the Selectivity filter element. Residues 470–480 (AQIQQKSILVW) are Extracellular-facing. A helical membrane pass occupies residues 481 to 502 (LFSRLYLYSFISLFIYMVLSLF). Topologically, residues 503–566 (IALITDSYHT…RSNDHLILID (64 aa)) are cytoplasmic.

It belongs to the transient receptor (TC 1.A.4) family. Polycystin subfamily. MCOLN2 sub-subfamily. As to quaternary structure, forms homooligomeric complexes; probably tetrameric. Can heterooligomerize with MCOLN1; heteromeric assemblies have different channel properties as compared to the respective homooligomers and may be tissue-specific. Interacts with TMEM176A. As to expression, expressed in activated macrophages and microglia (at protein level). Isoform 1 is widely expressed at very low levels. In terms of tissue distribution, isoform 2 is expressed at high levels in lymphoid tissues (thymus and spleen) and kidney, and at moderate levels in heart, lung, liver and stomach.

The protein localises to the cell membrane. Its subcellular location is the lysosome membrane. It localises to the recycling endosome membrane. It catalyses the reaction Ca(2+)(in) = Ca(2+)(out). The enzyme catalyses Fe(2+)(in) = Fe(2+)(out). Fe(2+) channel activity is potentiated by low pH. In terms of biological role, nonselective cation channel probably playing a role in the regulation of membrane trafficking events. Acts as a Ca(2+)-permeable cation channel with inwardly rectifying activity. May activate ARF6 and be involved in the trafficking of GPI-anchored cargo proteins to the cell surface via the ARF6-regulated recycling pathway. May play a role in immune processes. In adaptive immunity, TRPML2 and TRPML1 may play redundant roles in the function of the specialized lysosomes of B cells. In the innate immune response, may play a role in the regulation of chemokine secretion and macrophage migration. Through a possible and probably tissue-specific heteromerization with MCOLN1 may be at least in part involved in many lysosome-dependent cellular events. Also functions as a Fe(2+) permeable channel. In Mus musculus (Mouse), this protein is Mucolipin-2 (Mcoln2).